A 159-amino-acid polypeptide reads, in one-letter code: V-type proton ATPase 16 kDa proteolipid subunit c (159 aa).

Residues 1–12 (MSSEVSSDNPIY) lie on the Lumenal side of the membrane. A helical transmembrane segment spans residues 13–35 (GPFFGVMGAASAIIFSALGAAYG). Residues 36 to 57 (TAKSGTGIAAMSVMRPELIMKS) lie on the Cytoplasmic side of the membrane. The chain crosses the membrane as a helical span at residues 58 to 78 (IIPVVMAGIIAIYGLVVAVLI). The Lumenal portion of the chain corresponds to 79–96 (AGALEEPSKYSLYRGFIH). The helical transmembrane segment at 97-118 (LGAGLAVGFSGLAAGFAIGIVG) threads the bilayer. The Cytoplasmic segment spans residues 119 to 130 (DAGVRGTAQQPR). The helical transmembrane segment at 131 to 156 (LFVGMILILIFAEVLGLYGLIVAIYL) threads the bilayer. The Lumenal segment spans residues 157–159 (YTK).

Belongs to the V-ATPase proteolipid subunit family. V-ATPase is a heteromultimeric enzyme made up of two complexes: the ATP-hydrolytic V1 complex and the proton translocation V0 complex. The V1 complex consists of three catalytic AB heterodimers that form a heterohexamer, three peripheral stalks each consisting of EG heterodimers, one central rotor including subunits D and F, and the regulatory subunits C and H. The proton translocation complex V0 consists of the proton transport subunit a, a ring of proteolipid subunits c9c'', rotary subunit d, subunits e and f, and the accessory subunits VhaAC45 and ATP6AP2. As to expression, expressed in the larval middle mid-gut; predominantly in the copper cell region with lower levels of expression in the interstitial cells.

It is found in the membrane. Its function is as follows. Proton-conducting pore forming subunit of the V0 complex of vacuolar(H+)-ATPase (V-ATPase), a multisubunit enzyme composed of a peripheral complex (V1) that hydrolyzes ATP and a membrane integral complex (V0) that translocates protons. V-ATPase is responsible for acidifying and maintaining the pH of intracellular compartments and in some cell types, is targeted to the plasma membrane, where it is responsible for acidifying the extracellular environment. In enterocytes, acts as part of a pHCl-2 sensory pathway which mediates Tor-dependent larval growth and metabolism in response to zinc availability. Likely acts in maintaining enterocyte lysosomal acidification which consequently promotes Tor activation at the lysosome membrane. The polypeptide is V-type proton ATPase 16 kDa proteolipid subunit c (Vha16-1) (Drosophila melanogaster (Fruit fly)).